The following is a 327-amino-acid chain: Sideroflexin-2 (327 aa).

5 helical membrane passes run 99–119 (GMLI…VVLW), 143–163 (VTQL…AAIG), 175–195 (LFQR…NIPL), 228–248 (EVVV…PLIM), and 267–287 (FQTL…CALF).

It belongs to the sideroflexin family.

The protein localises to the mitochondrion membrane. The enzyme catalyses L-serine(in) = L-serine(out). Its function is as follows. Mitochondrial amino-acid transporter that mediates transport of serine into mitochondria. This Drosophila melanogaster (Fruit fly) protein is Sideroflexin-2.